The primary structure comprises 274 residues: 3-methyl-2-oxobutanoate hydroxymethyltransferase (274 aa).

Mg(2+) is bound by residues Asp44 and Asp83. 3-methyl-2-oxobutanoate is bound by residues 44-45 (DS), Asp83, and Lys113. Glu115 provides a ligand contact to Mg(2+). Glu182 (proton acceptor) is an active-site residue.

The protein belongs to the PanB family. In terms of assembly, homodecamer; pentamer of dimers. The cofactor is Mg(2+).

Its subcellular location is the cytoplasm. It carries out the reaction 3-methyl-2-oxobutanoate + (6R)-5,10-methylene-5,6,7,8-tetrahydrofolate + H2O = 2-dehydropantoate + (6S)-5,6,7,8-tetrahydrofolate. The protein operates within cofactor biosynthesis; (R)-pantothenate biosynthesis; (R)-pantoate from 3-methyl-2-oxobutanoate: step 1/2. Its function is as follows. Catalyzes the reversible reaction in which hydroxymethyl group from 5,10-methylenetetrahydrofolate is transferred onto alpha-ketoisovalerate to form ketopantoate. This chain is 3-methyl-2-oxobutanoate hydroxymethyltransferase, found in Campylobacter jejuni subsp. jejuni serotype O:6 (strain 81116 / NCTC 11828).